The sequence spans 145 residues: Superoxide dismutase [Mn/Fe] (145 aa).

Residues H10 and H64 each contribute to the Fe(3+) site. 2 residues coordinate Mn(2+): H10 and H64.

The protein belongs to the iron/manganese superoxide dismutase family. It depends on Mn(2+) as a cofactor. Fe(3+) is required as a cofactor.

It catalyses the reaction 2 superoxide + 2 H(+) = H2O2 + O2. Functionally, destroys superoxide anion radicals which are normally produced within the cells and which are toxic to biological systems. Catalyzes the dismutation of superoxide anion radicals into O2 and H2O2 by successive reduction and oxidation of the transition metal ion at the active site. The sequence is that of Superoxide dismutase [Mn/Fe] (sodA) from Streptococcus iniae (Streptococcus shiloi).